Consider the following 87-residue polypeptide: Large ribosomal subunit protein eL33 (87 aa).

Belongs to the eukaryotic ribosomal protein eL33 family.

This Pyrococcus woesei protein is Large ribosomal subunit protein eL33.